The primary structure comprises 255 residues: 5'-nucleotidase SurE (255 aa).

Asp-8, Asp-9, Ser-39, and Asn-91 together coordinate a divalent metal cation.

Belongs to the SurE nucleotidase family. A divalent metal cation is required as a cofactor.

The protein resides in the cytoplasm. It catalyses the reaction a ribonucleoside 5'-phosphate + H2O = a ribonucleoside + phosphate. Functionally, nucleotidase that shows phosphatase activity on nucleoside 5'-monophosphates. The protein is 5'-nucleotidase SurE of Acinetobacter baumannii (strain ATCC 17978 / DSM 105126 / CIP 53.77 / LMG 1025 / NCDC KC755 / 5377).